We begin with the raw amino-acid sequence, 150 residues long: UPF0178 protein Sbal223_2514 (150 aa).

It belongs to the UPF0178 family.

The protein is UPF0178 protein Sbal223_2514 of Shewanella baltica (strain OS223).